The sequence spans 81 residues: Small ribosomal subunit protein bS20 (81 aa).

The protein belongs to the bacterial ribosomal protein bS20 family.

Functionally, binds directly to 16S ribosomal RNA. The chain is Small ribosomal subunit protein bS20 from Mycoplasma capricolum subsp. capricolum (strain California kid / ATCC 27343 / NCTC 10154).